Reading from the N-terminus, the 120-residue chain is Large ribosomal subunit protein bL20 (120 aa).

Belongs to the bacterial ribosomal protein bL20 family.

Functionally, binds directly to 23S ribosomal RNA and is necessary for the in vitro assembly process of the 50S ribosomal subunit. It is not involved in the protein synthesizing functions of that subunit. The protein is Large ribosomal subunit protein bL20 of Methylobacillus flagellatus (strain ATCC 51484 / DSM 6875 / VKM B-1610 / KT).